We begin with the raw amino-acid sequence, 499 residues long: Glycerol kinase (499 aa).

T13 serves as a coordination point for ADP. ATP is bound by residues T13, T14, and S15. T13 contributes to the sn-glycerol 3-phosphate binding site. Residue R17 participates in ADP binding. Sn-glycerol 3-phosphate-binding residues include R83, E84, Y135, and D245. The glycerol site is built by R83, E84, Y135, D245, and Q246. ADP contacts are provided by T267 and G310. ATP is bound by residues T267, G310, Q314, and A411. ADP-binding residues include A411 and N415.

The protein belongs to the FGGY kinase family.

The enzyme catalyses glycerol + ATP = sn-glycerol 3-phosphate + ADP + H(+). Its pathway is polyol metabolism; glycerol degradation via glycerol kinase pathway; sn-glycerol 3-phosphate from glycerol: step 1/1. Its activity is regulated as follows. Inhibited by fructose 1,6-bisphosphate (FBP). Its function is as follows. Key enzyme in the regulation of glycerol uptake and metabolism. Catalyzes the phosphorylation of glycerol to yield sn-glycerol 3-phosphate. The sequence is that of Glycerol kinase from Xylella fastidiosa (strain M12).